The primary structure comprises 105 residues: uncharacterized protein (105 aa).

A helical membrane pass occupies residues 41–62; that stretch reads GIITKIAASPFVIVLYFNTAFF.

It is found in the membrane. This is an uncharacterized protein from Saccharomyces cerevisiae (strain ATCC 204508 / S288c) (Baker's yeast).